Reading from the N-terminus, the 1073-residue chain is MMKVIWFSSLICFVIQCSGDSGPIICAGPIHSNKSADIPHLLGYSEKICQIDRLIHVSSWLRNHSQFQGYVGQRGGRSQVSYYPAENSYSRWSGLLSPCDADWLGMLVVKKAKGSDMIVPGPSYKGKVFFERPTFDGYVGWGCGSGKSRTESGELCSSDSGTSSGLLPSDRVLWIGDVACQPMTPIPEETFLELKSFSQSEFPDICKIDGIVFNQCEGESLPQPFDVAWMDVGHSHKIIMREHKTKWVQESSSKDFVCYKEGTGPCSESEEKTCKTSGSCRGDMQFCKVAGCEHGEEASEAKCRCSLVHKPGEVVVSYGGMRVRPKCYGFSRMMATLEVNQPEQRLGQCTGCHLECINGGVRLITLTSELKSATVCASHFCSSATSGKKSTEIQFHSGSLVGKTAIHVKGALVDGTEFTFEGSCMFPDGCDAVDCTFCREFLKNPQCYPAKKWLFIIIVILLGYAGLMLLTNVLKAIGIWGSWVIAPVKLMFAIIKKLMRTVSCLMRKLMDRGRQVIHEEIGENREGNQDDVRIEMARPRRVRHWMYSPVILTILAIGLAESCDEMVHADSKLVSCRQGSGNMKECVTTGRALLPAVNPGQEACLHFTAPGSPDSKCLKIKVKRINLKCKKSSSYFVPDARSRCTSVRRCRWAGDCQSGCPPHFTSNSFSDDWAGKMDRAGLGFSGCSDGCGGAACGCFNAAPSCIFWRKWVENPHGIIWKVSPCAAWVPSAVIELTMPSGEVRTFHPMSGIPTQVFKGVSVTYLGSDMEVSGLTDLCEIEELKSKKLALAPCNQAGMGVVGKVGEIQCSSEESARTIKKDGCIWNADLVGIELRVDDAVCYSKITSVEAVANYSAIPTTIGGLRFERSHDSQGKISGSPLDITAIRGSFSVNYRGLRLSLSEITATCTGEVTNVSGCYSCMTGAKVSIKLHSSKNSTAHVRCKGDETAFSVLEGVHSYTVSLSFDHAVVDEQCQLNCGGHESQVTLKGNLIFLDVPKFVDGSYMQTYHSTVPTGANIPSPTDWLNALFGNGLSRWILGVIGVLLGGLALFFMIMSLFKLGTKQVFRSRTKLA.

An N-terminal signal peptide occupies residues 1–19 (MMKVIWFSSLICFVIQCSG). Residues 20-453 (DSGPIICAGP…NPQCYPAKKW (434 aa)) are Lumenal-facing. Cysteine 26 and cysteine 49 are joined by a disulfide. Asparagine 33 and asparagine 63 each carry an N-linked (GlcNAc...) asparagine; by host glycan. 10 cysteine pairs are disulfide-bonded: cysteine 143-cysteine 156, cysteine 180-cysteine 327, cysteine 206-cysteine 216, cysteine 258-cysteine 305, cysteine 266-cysteine 303, cysteine 274-cysteine 280, cysteine 287-cysteine 292, cysteine 349-cysteine 352, cysteine 356-cysteine 424, and cysteine 376-cysteine 381. Residues 454–474 (LFIIIVILLGYAGLMLLTNVL) traverse the membrane as a helical segment. Residues 475–521 (KAIGIWGSWVIAPVKLMFAIIKKLMRTVSCLMRKLMDRGRQVIHEEI) form a golgi retention signal region. The Cytoplasmic portion of the chain corresponds to 475–535 (KAIGIWGSWV…EGNQDDVRIE (61 aa)). The tract at residues 536–562 (MARPRRVRHWMYSPVILTILAIGLAES) is internal signal sequence for glycoprotein C. Cystine bridges form between cysteine 563-cysteine 604, cysteine 576-cysteine 586, cysteine 629-cysteine 725, cysteine 644-cysteine 841, cysteine 650-cysteine 698, cysteine 656-cysteine 705, cysteine 660-cysteine 687, cysteine 691-cysteine 696, cysteine 778-cysteine 793, and cysteine 809-cysteine 823. The Lumenal portion of the chain corresponds to 563–1036 (CDEMVHADSK…ALFGNGLSRW (474 aa)). The fusion loop stretch occupies residues 650–656 (CRWAGDC). The interval 691–705 (CGGAACGCFNAAPSC) is fusion loop. N-linked (GlcNAc...) asparagine; by host glycosylation is found at asparagine 853 and asparagine 914. Disulfide bonds link cysteine 908–cysteine 978, cysteine 918–cysteine 921, and cysteine 943–cysteine 974. An N-linked (GlcNAc...) asparagine; by host glycan is attached at asparagine 936. Residues 1037 to 1057 (ILGVIGVLLGGLALFFMIMSL) form a helical membrane-spanning segment. The Cytoplasmic portion of the chain corresponds to 1058–1073 (FKLGTKQVFRSRTKLA).

Belongs to the phlebovirus envelope glycoprotein family. As to quaternary structure, homodimer. Heterodimer with glycoprotein C. Homotrimer (postfusion). In terms of assembly, heterodimer with glycoprotein N. Post-translationally, specific enzymatic cleavages in vivo yield mature proteins including glycoprotein C and glycoprotein N. In terms of processing, the cytoplasmic tail is Palmitoylated. Glycosylated. Post-translationally, palmitoylated.

It is found in the virion membrane. It localises to the host Golgi apparatus membrane. The protein localises to the host endoplasmic reticulum membrane. Structural component of the virion that interacts with glycoprotein C. It shields the hydrophobic fusion loops of the glycoprotein C, preventing premature fusion. The glycoprotein protrusions are arranged on an icosahedral lattice, with T=12 triangulation. They are able to attach the virion to the host cell receptor CD209/DC-SIGN and to promote fusion of membranes with the late endosome after clathrin-mediated endocytosis of the virion. Plays a role in the packaging of ribonucleoproteins during virus assembly. Its function is as follows. Structural component of the virion that interacts with glycoprotein N. Acts as a class II fusion protein that is activated upon acidification and subsequent repositioning of the glycoprotein N. The glycoprotein protrusions are arranged on an icosahedral lattice, with T=12 triangulation. They are able to attach the virion to the host cell receptor CD209/DC-SIGN and to promote fusion of membranes with the late endosome after clathrin-mediated endocytosis of the virion. This chain is Envelopment polyprotein, found in Dabie bandavirus (Severe fever with thrombocytopenia virus).